Consider the following 472-residue polypeptide: uncharacterized protein (472 aa).

Helical transmembrane passes span 14-34, 53-73, 80-100, 113-133, 142-162, 169-189, 202-222, 227-247, 263-283, 302-322, 333-353, 359-379, 405-427, and 437-457; these read VIVG…TLLI, WLTT…AFLI, ALLI…AFAP, AAGA…IFPI, MVGL…GWAV, SLFY…SILM, ILSV…FSSV, WSSS…LLFI, FTFG…ALLI, FDTG…SPII, GLAI…MQLT, AWIV…MMPV, VGGS…HAGT, and GMNA…LLSF.

This sequence belongs to the major facilitator superfamily. EmrB family.

Its subcellular location is the cell membrane. This is an uncharacterized protein from Bacillus subtilis (strain 168).